Consider the following 147-residue polypeptide: Protein phosphatase 1 regulatory subunit 14A (147 aa).

A compositionally biased stretch (basic residues) spans 1 to 11 (MAAQRLGKRVL). The segment at 1–37 (MAAQRLGKRVLSKLQSPSRARGPGGSPGGLQKRHARV) is disordered. Serine 26 carries the phosphoserine modification. The tract at residues 35 to 120 (ARVTVKYDRR…LLVKLRGLHK (86 aa)) is inhibitory. Threonine 38 bears the Phosphothreonine mark. A disordered region spans residues 118–147 (LHKQPGLRQPSPSGDGSLSPRQDRARTAPP). The span at 127–137 (PSPSGDGSLSP) shows a compositional bias: polar residues. Phosphoserine occurs at positions 128, 134, and 136. The span at 138-147 (RQDRARTAPP) shows a compositional bias: basic and acidic residues.

It belongs to the PP1 inhibitor family. In terms of processing, phosphorylation of Thr-38 induces a conformation change. As to expression, detected in aorta smooth muscle and bladder.

The protein localises to the cytoplasm. Inhibitor of PPP1CA. Has over 1000-fold higher inhibitory activity when phosphorylated, creating a molecular switch for regulating the phosphorylation status of PPP1CA substrates and smooth muscle contraction. This chain is Protein phosphatase 1 regulatory subunit 14A (CPI17), found in Sus scrofa (Pig).